The primary structure comprises 541 residues: Chaperonin GroEL 2 (541 aa).

Residues 29–32 (TLGP), 86–90 (DGTTT), Gly413, 476–478 (NAA), and Asp492 each bind ATP.

Belongs to the chaperonin (HSP60) family. In terms of assembly, forms a cylinder of 14 subunits composed of two heptameric rings stacked back-to-back. Interacts with the co-chaperonin GroES.

It localises to the cytoplasm. It carries out the reaction ATP + H2O + a folded polypeptide = ADP + phosphate + an unfolded polypeptide.. Functionally, together with its co-chaperonin GroES, plays an essential role in assisting protein folding. The GroEL-GroES system forms a nano-cage that allows encapsulation of the non-native substrate proteins and provides a physical environment optimized to promote and accelerate protein folding. This chain is Chaperonin GroEL 2, found in Streptomyces coelicolor (strain ATCC BAA-471 / A3(2) / M145).